We begin with the raw amino-acid sequence, 95 residues long: Acylphosphatase (95 aa).

Residues arginine 5 to proline 93 form the Acylphosphatase-like domain. Residues arginine 20 and asparagine 38 contribute to the active site.

Belongs to the acylphosphatase family.

The enzyme catalyses an acyl phosphate + H2O = a carboxylate + phosphate + H(+). The polypeptide is Acylphosphatase (acyP) (Pyrobaculum islandicum (strain DSM 4184 / JCM 9189 / GEO3)).